Consider the following 173-residue polypeptide: Shikimate kinase (173 aa).

12–17 (GSGKTT) is a binding site for ATP. Threonine 16 serves as a coordination point for Mg(2+). Aspartate 34, arginine 58, and glycine 80 together coordinate substrate. Arginine 118 contributes to the ATP binding site. Arginine 136 lines the substrate pocket.

It belongs to the shikimate kinase family. As to quaternary structure, monomer. The cofactor is Mg(2+).

The protein resides in the cytoplasm. The catalysed reaction is shikimate + ATP = 3-phosphoshikimate + ADP + H(+). It functions in the pathway metabolic intermediate biosynthesis; chorismate biosynthesis; chorismate from D-erythrose 4-phosphate and phosphoenolpyruvate: step 5/7. Its function is as follows. Catalyzes the specific phosphorylation of the 3-hydroxyl group of shikimic acid using ATP as a cosubstrate. This Moorella thermoacetica (strain ATCC 39073 / JCM 9320) protein is Shikimate kinase.